The sequence spans 401 residues: Argininosuccinate synthase (401 aa).

Residue 9-17 (AYSGGLDTS) coordinates ATP. Tyrosine 88 is an L-citrulline binding site. An ATP-binding site is contributed by glycine 118. Positions 120, 124, and 125 each coordinate L-aspartate. Residue asparagine 124 participates in L-citrulline binding. 5 residues coordinate L-citrulline: arginine 128, serine 177, serine 186, glutamate 262, and tyrosine 274.

It belongs to the argininosuccinate synthase family. Type 1 subfamily. In terms of assembly, homotetramer.

The protein localises to the cytoplasm. The enzyme catalyses L-citrulline + L-aspartate + ATP = 2-(N(omega)-L-arginino)succinate + AMP + diphosphate + H(+). The protein operates within amino-acid biosynthesis; L-arginine biosynthesis; L-arginine from L-ornithine and carbamoyl phosphate: step 2/3. The sequence is that of Argininosuccinate synthase from Chlorobaculum tepidum (strain ATCC 49652 / DSM 12025 / NBRC 103806 / TLS) (Chlorobium tepidum).